Reading from the N-terminus, the 405-residue chain is uncharacterized protein (405 aa).

The next 12 membrane-spanning stretches (helical) occupy residues 19–39 (IVSIVMFNFASYLTIGLPLAV), 47–67 (VMGFSAFWAGLVISLQYFATL), 85–105 (IVVFGLCGCFLSGLGYLTAGL), 107–127 (ASLPVISLLLLCLGRVILGIG), 156–176 (GIVTYGAMAMGAPLGVVFYHW), 178–198 (GLQALALIIMGVALVAILLAI), 224–244 (GMALALASAGFGVIATFITLF), 252–272 (GAAFALTLFSCAFVGTRLLFP), 283–303 (VAMICFSVEIIGLLLVGVATM), 309–329 (IGVLLAGAGFSLVFPALGVVA), 344–364 (TYTVFMDLSLGVTGPLAGLVM), and 366–386 (WAGVPVIYLAAAGLVAIALLL).

Belongs to the major facilitator superfamily. YhhS family.

The protein resides in the cell inner membrane. This is an uncharacterized protein from Escherichia coli O6:H1 (strain CFT073 / ATCC 700928 / UPEC).